Consider the following 212-residue polypeptide: ATP-dependent dethiobiotin synthetase BioD (212 aa).

12 to 17 (DCGKTF) serves as a coordination point for ATP. Threonine 16 lines the Mg(2+) pocket. Lysine 33 is a catalytic residue. Substrate is bound at residue serine 37. ATP-binding positions include aspartate 50, 110–113 (EGAG), and 170–171 (NC). The Mg(2+) site is built by aspartate 50 and glutamate 110.

The protein belongs to the dethiobiotin synthetase family. Homodimer. Mg(2+) is required as a cofactor.

It is found in the cytoplasm. It catalyses the reaction (7R,8S)-7,8-diammoniononanoate + CO2 + ATP = (4R,5S)-dethiobiotin + ADP + phosphate + 3 H(+). The protein operates within cofactor biosynthesis; biotin biosynthesis; biotin from 7,8-diaminononanoate: step 1/2. In terms of biological role, catalyzes a mechanistically unusual reaction, the ATP-dependent insertion of CO2 between the N7 and N8 nitrogen atoms of 7,8-diaminopelargonic acid (DAPA, also called 7,8-diammoniononanoate) to form a ureido ring. The sequence is that of ATP-dependent dethiobiotin synthetase BioD from Legionella pneumophila (strain Lens).